The sequence spans 342 residues: Serpentine receptor class beta-16 (342 aa).

Topologically, residues M1–Q22 are extracellular. The chain crosses the membrane as a helical span at residues I23 to I43. The Cytoplasmic portion of the chain corresponds to K44–T61. The chain crosses the membrane as a helical span at residues M62–I82. Topologically, residues E83–A102 are extracellular. The helical transmembrane segment at I103–V123 threads the bilayer. The Cytoplasmic segment spans residues I124–S141. The chain crosses the membrane as a helical span at residues F142–W162. At A163–L187 the chain is on the extracellular side. Residues N188–V208 traverse the membrane as a helical segment. Topologically, residues R209–T237 are cytoplasmic. A helical transmembrane segment spans residues F238–F258. Topologically, residues T259–A274 are extracellular. Residues L275–I295 form a helical membrane-spanning segment. The Cytoplasmic portion of the chain corresponds to S296–K342.

This sequence belongs to the nematode receptor-like protein srb family. As to expression, expressed throughout the nervous system, in pharyngeal muscle, hermaphrodite vulval muscles and in the male tail. Not expressed in male somatic gonads or sperm.

It is found in the cell membrane. Its subcellular location is the perikaryon. The protein localises to the cell projection. The protein resides in the dendrite. G-protein coupled receptor. Plays a role in the navigational capacity of sperm and promotes the targeting of sperm derived from males to the fertilization site in the uterus of hermaphrodites. The polypeptide is Serpentine receptor class beta-16 (Caenorhabditis elegans).